Reading from the N-terminus, the 451-residue chain is Serine--tRNA ligase (451 aa).

258–260 (TSE) is an L-serine binding site. 289–291 (RSE) lines the ATP pocket. Glu312 provides a ligand contact to L-serine. Residue 376–379 (EISS) coordinates ATP. An L-serine-binding site is contributed by Ser411.

Belongs to the class-II aminoacyl-tRNA synthetase family. Type-1 seryl-tRNA synthetase subfamily. Homodimer. The tRNA molecule binds across the dimer.

The protein localises to the cytoplasm. The enzyme catalyses tRNA(Ser) + L-serine + ATP = L-seryl-tRNA(Ser) + AMP + diphosphate + H(+). The catalysed reaction is tRNA(Sec) + L-serine + ATP = L-seryl-tRNA(Sec) + AMP + diphosphate + H(+). It participates in aminoacyl-tRNA biosynthesis; selenocysteinyl-tRNA(Sec) biosynthesis; L-seryl-tRNA(Sec) from L-serine and tRNA(Sec): step 1/1. Functionally, catalyzes the attachment of serine to tRNA(Ser). Is also able to aminoacylate tRNA(Sec) with serine, to form the misacylated tRNA L-seryl-tRNA(Sec), which will be further converted into selenocysteinyl-tRNA(Sec). The sequence is that of Serine--tRNA ligase from Bordetella bronchiseptica (strain ATCC BAA-588 / NCTC 13252 / RB50) (Alcaligenes bronchisepticus).